The primary structure comprises 209 residues: uncharacterized protein (209 aa).

This is an uncharacterized protein from Acanthamoeba polyphaga mimivirus (APMV).